The following is a 688-amino-acid chain: Collagen alpha-2(IX) chain (688 aa).

An N-terminal signal peptide occupies residues 1–22; the sequence is MTAVPAPRSLFVLLQVLWLALA. The segment at 26–162 is triple-helical region 4 (COL4); that stretch reads GPPGEPGPPG…PGKPGRPGTI (137 aa). The disordered stretch occupies residues 26–171; it reads GPPGEPGPPG…IQGLEGSADF (146 aa). 2 stretches are compositionally biased toward pro residues: residues 28-42 and 105-126; these read PGEPGPPGPPGPPGV and LPGPPGLPGPGFAGPPGPPGPV. Over residues 128–137 the composition is skewed to low complexity; the sequence is LPGEIGTPGP. A compositionally biased stretch (pro residues) spans 138–156; it reads KGDPGPEGPSGPPGPPGKP. P159 is subject to 4-hydroxyproline. Positions 163–179 are nonhelical region 4 (NC4); the sequence is QGLEGSADFLCPTNCPA. An O-linked (Xyl...) (glycosaminoglycan) serine glycan is attached at S168. The tract at residues 180–518 is triple-helical region 3 (COL3); the sequence is GVKGPQGLQG…PGRQGVVGRA (339 aa). Residue K182 is modified to 5-hydroxylysine. A glycan (O-linked (Gal...) hydroxylysine) is linked at K182. The disordered stretch occupies residues 183 to 517; it reads GPQGLQGVKG…QPGRQGVVGR (335 aa). Low complexity-rich tracts occupy residues 289–314 and 392–412; these read PQGITGPKGITGPPGIDGKDGTPGIP and RGPVGQPGPQGRQGPKGEQGP. Residues 435 to 444 are compositionally biased toward gly residues; the sequence is GPRGGVGDPG. The segment covering 502 to 517 has biased composition (low complexity); that stretch reads DRGVPGQPGRQGVVGR. The tract at residues 519-548 is nonhelical region 3 (NC3); that stretch reads ASDQHIVDVVLKMIQEQLAEVAVSAKREAL. A triple-helical region 2 (COL2) region spans residues 549-631; the sequence is GAAGMVGLPG…PGLPGRPGQA (83 aa). The segment at 553-664 is disordered; the sequence is MVGLPGPPGP…GPVGLPGFCE (112 aa). The span at 598–610 shows a compositional bias: basic and acidic residues; that stretch reads KRGEKGDRGEMGH. Residues 632–633 form a nonhelical region 2 (NC2) region; the sequence is IN. The tract at residues 634–663 is triple-helical region 1 (COL1); sequence GKDGDRGSPGAPGEAGRPGRPGPVGLPGFC. The interval 664 to 688 is nonhelical region 1 (NC1); it reads EPAACLGASAYTSARLTEPGSIKGP.

Belongs to the fibril-associated collagens with interrupted helices (FACIT) family. Heterotrimer of an alpha 1(IX), an alpha 2(IX) and an alpha 3(IX) chain. The chains are linked to each other by interchain disulfide bonds. Trimers are also cross-linked via hydroxylysines. Covalently linked to the telopeptides of type II collagen by lysine-derived cross-links. Post-translationally, prolines at the third position of the tripeptide repeating unit (G-X-Y) are hydroxylated in some or all of the chains.

It localises to the secreted. It is found in the extracellular space. Its subcellular location is the extracellular matrix. Its function is as follows. Structural component of hyaline cartilage and vitreous of the eye. This chain is Collagen alpha-2(IX) chain (Col9a2), found in Mus musculus (Mouse).